The sequence spans 78 residues: Exodeoxyribonuclease 7 small subunit (78 aa).

This sequence belongs to the XseB family. Heterooligomer composed of large and small subunits.

It localises to the cytoplasm. It catalyses the reaction Exonucleolytic cleavage in either 5'- to 3'- or 3'- to 5'-direction to yield nucleoside 5'-phosphates.. Functionally, bidirectionally degrades single-stranded DNA into large acid-insoluble oligonucleotides, which are then degraded further into small acid-soluble oligonucleotides. The chain is Exodeoxyribonuclease 7 small subunit from Mycobacterium leprae (strain TN).